Consider the following 278-residue polypeptide: E3 ubiquitin-protein ligase MARCHF5 (278 aa).

The RING-CH-type zinc-finger motif lies at 6–75 (LQQMLDRSCW…PQCNAEYLIV (70 aa)). Residues Cys14, Cys17, Cys33, Cys35, His43, Cys46, Cys65, and Cys68 each coordinate Zn(2+). A run of 4 helical transmembrane segments spans residues 99–119 (FAAA…YGAV), 139–159 (PLFL…GKMI), 209–229 (ILCG…LMFS), and 238–258 (TILG…YFKQ).

In terms of assembly, monomer and homodimer. Interacts with MFN1, MFN2, DNM1L and FIS1. In terms of processing, autoubiquitinated leading to degradation (short half-life).

It is found in the mitochondrion outer membrane. It catalyses the reaction S-ubiquitinyl-[E2 ubiquitin-conjugating enzyme]-L-cysteine + [acceptor protein]-L-lysine = [E2 ubiquitin-conjugating enzyme]-L-cysteine + N(6)-ubiquitinyl-[acceptor protein]-L-lysine.. It functions in the pathway protein modification; protein ubiquitination. Its function is as follows. Mitochondrial E3 ubiquitin-protein ligase that plays a crucial role in the control of mitochondrial morphology by acting as a positive regulator of mitochondrial fission and as an important regulator of immune response. Plays a crucial role in maintaining mitochondrial homeostasis by regulating the dynamics of mitochondria through the ubiquitination of key proteins involved in fission and fusion such as FIS1, DNM1L and MFN1. Acts as a critical determinant of mitotic apoptosis through both MCL1-dependent and -independent pathways. Turns off persistent immune signaling by degrading oligomeric complexes of retinoic acid-inducible gene I/DDX58 and mitochondrial antiviral-signaling protein/MAVS formed upon RNA virus infection. Promotes STING-mediated type-I interferon production via 'Lys-63'-linked ubiquitination of STING1 thereby preserving its activity and preventing the formation of inactive STING1 polymers. Plays also an essential role in the formation of PEX3-containing vesicles in the de novo biogenesis of peroxisomes from mitochondria. Acts as a regulator of NLRP3 inflammasome activation on the mitochondria by mediating the 'Lys-27'-linked polyubiquitination of NLRP3, positively regulating the NLRP3-NEK7 complex formation and NLRP3 oligomerization. This chain is E3 ubiquitin-protein ligase MARCHF5 (MARCHF5), found in Bos taurus (Bovine).